The chain runs to 649 residues: Glycerol-3-phosphate dehydrogenase, mitochondrial (649 aa).

69–97 (DVLIIGGGATGTGVAVDASTRGLNVCLLE) lines the FAD pocket.

Belongs to the FAD-dependent glycerol-3-phosphate dehydrogenase family. FAD serves as cofactor.

The protein localises to the mitochondrion. It carries out the reaction a quinone + sn-glycerol 3-phosphate = dihydroxyacetone phosphate + a quinol. It functions in the pathway polyol metabolism; glycerol degradation via glycerol kinase pathway; glycerone phosphate from sn-glycerol 3-phosphate (anaerobic route): step 1/1. This is Glycerol-3-phosphate dehydrogenase, mitochondrial (gut2) from Schizosaccharomyces pombe (strain 972 / ATCC 24843) (Fission yeast).